The sequence spans 324 residues: Alkanal monooxygenase beta chain (324 aa).

Belongs to the bacterial luciferase oxidoreductase family. Heterodimer of an alpha and a beta chain.

The enzyme catalyses a long-chain fatty aldehyde + FMNH2 + O2 = a long-chain fatty acid + hnu + FMN + H2O + 2 H(+). Its function is as follows. Light-emitting reaction in luminous bacteria. The specific role of the beta subunit is unknown, but it is absolutely required for bioluminescence activity. This is Alkanal monooxygenase beta chain (luxB) from Vibrio harveyi (Beneckea harveyi).